Here is a 458-residue protein sequence, read N- to C-terminus: UPF0210 protein MmarC5_0151 (458 aa).

This sequence belongs to the UPF0210 family.

The sequence is that of UPF0210 protein MmarC5_0151 from Methanococcus maripaludis (strain C5 / ATCC BAA-1333).